A 234-amino-acid polypeptide reads, in one-letter code: Interleukin-34 (234 aa).

The N-terminal stretch at 1–20 (MPWGLAWLYCLGILLDVALG) is a signal peptide. Asn-99 carries an N-linked (GlcNAc...) asparagine glycan. The disordered stretch occupies residues 215–234 (PRQPPTSLPRSPSSNHGPLP). Polar residues predominate over residues 222–234 (LPRSPSSNHGPLP).

This sequence belongs to the IL-34 family. As to quaternary structure, homodimer. Interacts with CSF1R.

It is found in the secreted. In terms of biological role, cytokine that promotes the proliferation, survival and differentiation of monocytes and macrophages. Promotes the release of pro-inflammatory chemokines, and thereby plays an important role in innate immunity and in inflammatory processes. Plays an important role in the regulation of osteoclast proliferation and differentiation, and in the regulation of bone resorption. Signaling via CSF1R and its downstream effectors stimulates phosphorylation of MAPK1/ERK2 AND MAPK3/ERK1. This chain is Interleukin-34 (Il34), found in Rattus norvegicus (Rat).